Consider the following 215-residue polypeptide: uncharacterized protein (215 aa).

This is an uncharacterized protein from Escherichia coli (strain K12).